The primary structure comprises 627 residues: Phosphomethylpyrimidine synthase (627 aa).

Residues 1–24 (MSATQKNNITRLEQLDRQSTQPFP) show a composition bias toward polar residues. The interval 1 to 29 (MSATQKNNITRLEQLDRQSTQPFPNSRKV) is disordered. Residues N231, M260, Y289, H325, 345–347 (SRG), 386–389 (DGLR), and E425 each bind substrate. Position 429 (H429) interacts with Zn(2+). Position 452 (Y452) interacts with substrate. H493 contacts Zn(2+). [4Fe-4S] cluster contacts are provided by C573, C576, and C581.

Belongs to the ThiC family. As to quaternary structure, homodimer. The cofactor is [4Fe-4S] cluster.

The enzyme catalyses 5-amino-1-(5-phospho-beta-D-ribosyl)imidazole + S-adenosyl-L-methionine = 4-amino-2-methyl-5-(phosphooxymethyl)pyrimidine + CO + 5'-deoxyadenosine + formate + L-methionine + 3 H(+). Its pathway is cofactor biosynthesis; thiamine diphosphate biosynthesis. Catalyzes the synthesis of the hydroxymethylpyrimidine phosphate (HMP-P) moiety of thiamine from aminoimidazole ribotide (AIR) in a radical S-adenosyl-L-methionine (SAM)-dependent reaction. The polypeptide is Phosphomethylpyrimidine synthase (Pseudomonas paraeruginosa (strain DSM 24068 / PA7) (Pseudomonas aeruginosa (strain PA7))).